The primary structure comprises 649 residues: Drebrin (649 aa).

A2 bears the N-acetylalanine mark. One can recognise an ADF-H domain in the interval 3 to 134 (GVSFSGHRLE…DAGAIGQRLS (132 aa)). A phosphoserine mark is found at S141 and S142. Composition is skewed to basic and acidic residues over residues 208-236 (QERMEQERQEQEERERRYREREQQIEEHR) and 288-298 (DNPREFFKQQE). 3 disordered regions span residues 208-420 (QERM…PAED), 477-502 (DLWPGNGEGASTLQGEPRAPTPPSGT), and 538-620 (EPPA…PPPV). A phosphothreonine mark is found at T331 and T335. Positions 334 to 348 (PTRSPSDSSTASTPV) are enriched in polar residues. Phosphoserine occurs at positions 337, 339, and 345. Residue T346 is modified to Phosphothreonine. Residues 363–374 (QPPPLPPPPPPA) are compositionally biased toward pro residues. At S416 the chain carries Phosphoserine. Phosphothreonine is present on T497. Residues 582 to 594 (NGETTQKEGTQAS) are compositionally biased toward polar residues. A Phosphoserine modification is found at S601.

In terms of assembly, interacts with RUFY3. Interacts with CXCR4; this interaction is enhanced by antigenic stimulation. Interacts (via ADF-H domain) with ZMYND8 (via N-terminus); the interaction leads to sequestering of ZMYND8 in the cytoplasm. Expressed in the brain, with expression in the molecular layer of the dentate gyrus, stratum pyramidale, and stratum radiatum of the hippocampus (at protein level). Also expressed in the terminal varicosities distributed along dendritic trees of pyramidal cells in CA4 and CA3 of the hippocampus (at protein level). Expressed in pyramidal cells in CA2, CA1 and the subiculum of the hippocampus (at protein level). Expressed in peripheral blood lymphocytes, including T-cells (at protein level). Expressed in the brain. Expressed in the heart, placenta, lung, skeletal muscle, kidney, pancreas, skin fibroblasts, gingival fibroblasts and bone-derived cells.

It localises to the cytoplasm. The protein localises to the cell projection. The protein resides in the dendrite. It is found in the cell cortex. Its subcellular location is the cell junction. It localises to the growth cone. Actin cytoskeleton-organizing protein that plays a role in the formation of cell projections. Required for actin polymerization at immunological synapses (IS) and for the recruitment of the chemokine receptor CXCR4 to IS. Plays a role in dendritic spine morphogenesis and organization, including the localization of the dopamine receptor DRD1 to the dendritic spines. Involved in memory-related synaptic plasticity in the hippocampus. The polypeptide is Drebrin (DBN1) (Homo sapiens (Human)).